A 219-amino-acid chain; its full sequence is Peroxiredoxin (219 aa).

A Thioredoxin domain is found at 2–164; it reads PLIGDDAPSF…IKRIVVALQK (163 aa). Residue Cys-44 is the Cysteine sulfenic acid (-SOH) intermediate of the active site. Arg-127 is a substrate binding site. The cysteines at positions 206 and 212 are disulfide-linked.

This sequence belongs to the peroxiredoxin family. Prx6 subfamily. In terms of assembly, homodecamer. Pentamer of dimers that assemble into a ring structure.

The protein localises to the cytoplasm. It carries out the reaction a hydroperoxide + [thioredoxin]-dithiol = an alcohol + [thioredoxin]-disulfide + H2O. In terms of biological role, thiol-specific peroxidase that catalyzes the reduction of hydrogen peroxide and organic hydroperoxides to water and alcohols, respectively. Plays a role in cell protection against oxidative stress by detoxifying peroxides. In Methanosarcina mazei (strain ATCC BAA-159 / DSM 3647 / Goe1 / Go1 / JCM 11833 / OCM 88) (Methanosarcina frisia), this protein is Peroxiredoxin.